Consider the following 379-residue polypeptide: MSAIRYELIKTDKQTGARLGKIHTPHGTFDTPMFMPVGTLATVKTMSPEELKAMGAGIILSNTYHLWLRPGEELIREAGGLHKFMNWDQPILTDSGGFQVFSLSKMRDIKEEGVHFRNHLNGDKLFLSPEKAIQIQNALGSDIMMSFDECPPYPASHEYMKKSVERTSRWAERGLKAHVRPEDQGLFGIVQGGAYEDLRAQSAKDLVSLDFPGYSIGGLSVGEPKDVMNRVLEHTTPLLPANKPRYLMGVGSPDSLIDGVIRGVDMFDCVLPTRIARNGTCMTSSGRLVIKNAKFTHDFRPIDENCDCYTCKNYSRAYIRHLIRCEETFGIRLTTYHNLHFLLNLMKQVRGAIMEDRLADFREEFFEQYGFNRPDAKNF.

The active-site Proton acceptor is D94. Residues D94 to F98, D148, Q191, and G218 contribute to the substrate site. The RNA binding stretch occupies residues G249 to S255. The active-site Nucleophile is the D268. Residues T273–R277 form an RNA binding; important for wobble base 34 recognition region. C306, C308, C311, and H337 together coordinate Zn(2+).

Belongs to the queuine tRNA-ribosyltransferase family. In terms of assembly, homodimer. Within each dimer, one monomer is responsible for RNA recognition and catalysis, while the other monomer binds to the replacement base PreQ1. Zn(2+) serves as cofactor.

The enzyme catalyses 7-aminomethyl-7-carbaguanine + guanosine(34) in tRNA = 7-aminomethyl-7-carbaguanosine(34) in tRNA + guanine. Its pathway is tRNA modification; tRNA-queuosine biosynthesis. Catalyzes the base-exchange of a guanine (G) residue with the queuine precursor 7-aminomethyl-7-deazaguanine (PreQ1) at position 34 (anticodon wobble position) in tRNAs with GU(N) anticodons (tRNA-Asp, -Asn, -His and -Tyr). Catalysis occurs through a double-displacement mechanism. The nucleophile active site attacks the C1' of nucleotide 34 to detach the guanine base from the RNA, forming a covalent enzyme-RNA intermediate. The proton acceptor active site deprotonates the incoming PreQ1, allowing a nucleophilic attack on the C1' of the ribose to form the product. After dissociation, two additional enzymatic reactions on the tRNA convert PreQ1 to queuine (Q), resulting in the hypermodified nucleoside queuosine (7-(((4,5-cis-dihydroxy-2-cyclopenten-1-yl)amino)methyl)-7-deazaguanosine). The chain is Queuine tRNA-ribosyltransferase from Listeria monocytogenes serovar 1/2a (strain ATCC BAA-679 / EGD-e).